A 618-amino-acid polypeptide reads, in one-letter code: Proline--tRNA ligase (618 aa).

The protein belongs to the class-II aminoacyl-tRNA synthetase family. ProS type 1 subfamily. As to quaternary structure, homodimer.

It localises to the cytoplasm. The catalysed reaction is tRNA(Pro) + L-proline + ATP = L-prolyl-tRNA(Pro) + AMP + diphosphate. Functionally, catalyzes the attachment of proline to tRNA(Pro) in a two-step reaction: proline is first activated by ATP to form Pro-AMP and then transferred to the acceptor end of tRNA(Pro). As ProRS can inadvertently accommodate and process non-cognate amino acids such as alanine and cysteine, to avoid such errors it has two additional distinct editing activities against alanine. One activity is designated as 'pretransfer' editing and involves the tRNA(Pro)-independent hydrolysis of activated Ala-AMP. The other activity is designated 'posttransfer' editing and involves deacylation of mischarged Ala-tRNA(Pro). The misacylated Cys-tRNA(Pro) is not edited by ProRS. This Streptococcus equi subsp. equi (strain 4047) protein is Proline--tRNA ligase.